Here is a 184-residue protein sequence, read N- to C-terminus: Inactive cytochrome P450 monooxygenase lolP2 (184 aa).

The chain crosses the membrane as a helical span at residues 10-30; the sequence is GIVWLTVAAIAISYILQSSFL. The disordered stretch occupies residues 161–184; it reads RRTRGSRPRSRPRWMPARWSRSSP. A compositionally biased stretch (basic residues) spans 163 to 172; sequence TRGSRPRSRP. A compositionally biased stretch (low complexity) spans 173 to 184; the sequence is RWMPARWSRSSP.

The protein belongs to the cytochrome P450 family.

The protein resides in the membrane. Its function is as follows. Cytochrome P450 monooxygenase; part of the gene cluster that mediates the biosynthesis of loline alkaloids, potent insecticidal agents composed of a pyrrolizidine ring system and an uncommon ether bridge linking carbons 2 and 7. Lolines are structurally differentiated by the various modifications of the L-amino group and include norloline, loline, N-methylloline, N-acetylloline, N-acetylnorloline, and N-formylloline. The first committed step is the condensation of O-acetyl-L-homoserine (derived from L-aspartic acid) and L-proline, probably catalyzed by the gamma-type pyridoxal 5'-phosphate(PLP)-dependent enzyme lolC, to give the diamino diacid, NACPP. Ensuing cyclization, decarboxylation, and acetylation steps yield 1-exo-acetamidopyrrolizidine (AcAP). LolO is required for installation of the ether bridge upon the pathway intermediate, 1-exo-acetamidopyrrolizidine (AcAP). In sequential 2-oxoglutarate- and O(2)-consuming steps, lolO removes hydrogens from C2 and C7 of AcAP to form both carbon-oxygen bonds in N-acetylnorloline (NANL), the precursor to all other lolines. The enzymes lolD, lolE, lolF and lolT have also been proposed to be involved in the ether-bridge installation. Further processing of the exocyclic moiety of NANL by fungal N-acetamidase (LolN), methyltransferase (LolM), and cytochrome P450 (LolP) enzymes, with occasional involvement of a plant acetyltransferase, generates the other known lolines. LolN transforms NANL to norlonine which is monomethylated and dimethylated to respectively lonine and N-methyllonine (NML) by lolM. LolP catalyzes hydroxylation of the methyl group in N-methylloline (NML) and further oxygenation to N-formylloline (NFL). A plant acetyltransferase is responsible for the acetylation of loline to form N-acetylloline (NAL). LolA might interact with aspartate kinase to prevent feedback inhibition of its activity by these end products and thereby promote production of L-homoserine from L-aspartate. The sequence is that of Inactive cytochrome P450 monooxygenase lolP2 from Epichloe uncinata (Endophyte fungus).